We begin with the raw amino-acid sequence, 447 residues long: Glutamate--tRNA ligase 2 (447 aa).

The 'HIGH' region signature appears at Pro9–Asn19. Positions Gly240–Arg244 match the 'KMSKS' region motif. Lys243 serves as a coordination point for ATP.

This sequence belongs to the class-I aminoacyl-tRNA synthetase family. Glutamate--tRNA ligase type 1 subfamily. As to quaternary structure, monomer.

Its subcellular location is the cytoplasm. It carries out the reaction tRNA(Glu) + L-glutamate + ATP = L-glutamyl-tRNA(Glu) + AMP + diphosphate. In terms of biological role, catalyzes the attachment of glutamate to tRNA(Glu) in a two-step reaction: glutamate is first activated by ATP to form Glu-AMP and then transferred to the acceptor end of tRNA(Glu). This is Glutamate--tRNA ligase 2 from Methylobacterium sp. (strain 4-46).